The chain runs to 417 residues: Serine hydroxymethyltransferase (417 aa).

(6S)-5,6,7,8-tetrahydrofolate-binding positions include Leu121 and 125-127 (GHL). Lys229 bears the N6-(pyridoxal phosphate)lysine mark. Residue 355–357 (SPF) participates in (6S)-5,6,7,8-tetrahydrofolate binding.

Belongs to the SHMT family. In terms of assembly, homodimer. Requires pyridoxal 5'-phosphate as cofactor.

It is found in the cytoplasm. The catalysed reaction is (6R)-5,10-methylene-5,6,7,8-tetrahydrofolate + glycine + H2O = (6S)-5,6,7,8-tetrahydrofolate + L-serine. It functions in the pathway one-carbon metabolism; tetrahydrofolate interconversion. Its pathway is amino-acid biosynthesis; glycine biosynthesis; glycine from L-serine: step 1/1. In terms of biological role, catalyzes the reversible interconversion of serine and glycine with tetrahydrofolate (THF) serving as the one-carbon carrier. This reaction serves as the major source of one-carbon groups required for the biosynthesis of purines, thymidylate, methionine, and other important biomolecules. Also exhibits THF-independent aldolase activity toward beta-hydroxyamino acids, producing glycine and aldehydes, via a retro-aldol mechanism. The protein is Serine hydroxymethyltransferase of Photorhabdus laumondii subsp. laumondii (strain DSM 15139 / CIP 105565 / TT01) (Photorhabdus luminescens subsp. laumondii).